Consider the following 428-residue polypeptide: Enolase (428 aa).

Glutamine 162 is a (2R)-2-phosphoglycerate binding site. The active-site Proton donor is the glutamate 204. Mg(2+)-binding residues include aspartate 241, glutamate 282, and aspartate 309. Residues lysine 334, arginine 363, serine 364, and lysine 385 each contribute to the (2R)-2-phosphoglycerate site. Lysine 334 (proton acceptor) is an active-site residue.

Belongs to the enolase family. Requires Mg(2+) as cofactor.

It localises to the cytoplasm. Its subcellular location is the secreted. The protein localises to the cell surface. The catalysed reaction is (2R)-2-phosphoglycerate = phosphoenolpyruvate + H2O. It functions in the pathway carbohydrate degradation; glycolysis; pyruvate from D-glyceraldehyde 3-phosphate: step 4/5. Functionally, catalyzes the reversible conversion of 2-phosphoglycerate (2-PG) into phosphoenolpyruvate (PEP). It is essential for the degradation of carbohydrates via glycolysis. In Mycobacterium ulcerans (strain Agy99), this protein is Enolase.